Reading from the N-terminus, the 509-residue chain is Cytochrome P450 monooxygenase traB (509 aa).

Residues 8–28 (LVELVSITGGLIVLFIAYTGF) form a helical membrane-spanning segment. Cysteine 453 is a heme binding site.

It belongs to the cytochrome P450 family. Heme is required as a cofactor.

It localises to the membrane. It participates in secondary metabolite biosynthesis. In terms of biological role, cytochrome P450 monooxygenase; part of the tra gene cluster that produces terrestric acid. The clavatol biosynthesis cluster cla and the terrestric acid cluster tra are both involved in the production of peniphenones and penilactones. The non-reducing PKS claF is responsible for the formation of clavatol from successive condensations of 3 malonyl-CoA units, presumably with a simple acetyl-CoA starter unit, and 2 methylation steps. The esterase claE probably collaborates with claF by catalyzing the hydrolysis of ACP-bound acyl intermediates to free the ACP from stalled intermediates. The clavatol oxidase claD then converts clavatol to hydroxyclavatol. Spontaneous dehydration of hydroxyclavatol leads to the accumulation of the highly active ortho-quinone methide. On the other hand, the PKS-NRPS hybrid traA is involved in the formation of crustosic acid, with the help of traB and traD. The polyketide synthase module (PKS) of traA is responsible for the synthesis of the polyketide backbone via the condensation of an acetyl-CoA starter unit with 3 malonyl-CoA units. The downstream nonribosomal peptide synthetase (NRPS) module then amidates the carboxyl end of the polyketide with L-malic acid. Because traA lacks a designated enoylreductase (ER) domain, the required activity is provided the enoyl reductase traG. Crustosic acid undergoes decarboxylation and isomerization to the terrestric acid, catalyzed by the 2-oxoglutarate-dependent dioxygenase traH. Both acids are further converted to the 2 gamma-butyrolactones (R)-5-methyltetronic acid and (S)-5-carboxylmethyltetronic acid, with involvement of the cytochrome P450 monooxygenase claJ. Spontaneous addition of the methide to these gamma-butyrolactones leads to peniphenone D and penilactone D, which undergo again stereospecific attacking by methide to give penilactones A and B. The protein is Cytochrome P450 monooxygenase traB of Penicillium crustosum (Blue mold fungus).